The sequence spans 67 residues: Moricin (67 aa).

Residues 1–23 form the signal peptide; the sequence is MKLTSLFIFVIVALSLLFSSTDA.

It belongs to the moricin family. In terms of assembly, monomer.

The protein localises to the secreted. Functionally, antimicrobial peptide. Active against a broad spectrum of Gram-positive and Gram-negative bacteria including methicillin-resistant S.aureus ATCC 43 300, S.aureus BAA-39, pathogenic strains of L.monocytogenes, K.pneumoniae, E.coli O157:H7, S.typhimurium and multidrug-resistant S.typhimurium DT104 with minimum inhibitory concentration (MIC) of 1.4 uM for all except for S.aureus BAA-39. Also active against Serratia marcescens. Probably acts by disturbing membrane functions with its amphipathic alpha-helical structure. May protect a developing embryo from bacterial infection. The polypeptide is Moricin (Manduca sexta (Tobacco hawkmoth)).